A 273-amino-acid polypeptide reads, in one-letter code: MSFDINWEQLRNDSNLNRTVTEKLNGYLTSINLPSYVNNLRIERFSMGDRPPKVTLRQITDPVQDFYDAINEELQMSAEEETEGSDDEGYGGDRVRNRGIDTQTVFPSANDVQFLVEMEYNGNMSITVTAEMVLNYPSKKFMALPIRLTISNIGFHTLCLIAFLSKQLFFSFLCDVTDPILDEDDSILDQNGPLLSSKGPLERISIIRSLSISTEVGEEYQGDGSVLKSVGKLEQFLKEKLKDFLRKEVAWPSWINFDFYEPEDNESDDNQIN.

In terms of domain architecture, SMP-LTD spans 1 to 260; it reads MSFDINWEQL…WPSWINFDFY (260 aa). Residues 76–98 form a disordered region; sequence MSAEEETEGSDDEGYGGDRVRNR. A compositionally biased stretch (acidic residues) spans 78–90; the sequence is AEEETEGSDDEGY.

The protein belongs to the MDM12 family. As to quaternary structure, component of the ER-mitochondria encounter structure (ERMES) or MDM complex, composed of MMM1, MDM10, MDM12 and MDM34. An MMM1 homodimer associates with one molecule of MDM12 on each side in a pairwise head-to-tail manner, and the SMP-LTD domains of MMM1 and MDM12 generate a continuous hydrophobic tunnel for phospholipid trafficking.

The protein resides in the mitochondrion outer membrane. It is found in the endoplasmic reticulum membrane. In terms of biological role, component of the ERMES/MDM complex, which serves as a molecular tether to connect the endoplasmic reticulum (ER) and mitochondria. Components of this complex are involved in the control of mitochondrial shape and protein biogenesis, and function in nonvesicular lipid trafficking between the ER and mitochondria. MDM12 is required for the interaction of the ER-resident membrane protein MMM1 and the outer mitochondrial membrane-resident beta-barrel protein MDM10. The MDM12-MMM1 subcomplex functions in the major beta-barrel assembly pathway that is responsible for biogenesis of all mitochondrial outer membrane beta-barrel proteins, and acts in a late step after the SAM complex. The MDM10-MDM12-MMM1 subcomplex further acts in the TOM40-specific pathway after the action of the MDM12-MMM1 complex. Essential for establishing and maintaining the structure of mitochondria and maintenance of mtDNA nucleoids. The chain is Mitochondrial distribution and morphology protein 12 from Vanderwaltozyma polyspora (strain ATCC 22028 / DSM 70294 / BCRC 21397 / CBS 2163 / NBRC 10782 / NRRL Y-8283 / UCD 57-17) (Kluyveromyces polysporus).